Reading from the N-terminus, the 166-residue chain is Anterior gradient protein 3 (166 aa).

Residues 1-21 (MMLHSALGLCLLLVTVSSNLA) form the signal peptide. The short motif at 163-166 (QSEL) is the Prevents secretion from ER element.

It belongs to the AGR family. As to quaternary structure, interacts with LYPD3 and DAG1 (alphaDAG1). As to expression, expressed in the lung, in the ciliated cells of the airway epithelium. Expression increased with differentiation of airway epithelial cells. Not detected in the mucous cells. Expressed in ciliated cells in the oviduct. Also detected in stomach, colon, prostate and liver. Expressed in breast, ovary, prostate and liver cancer. Expression is associated with the level of differentiation of breast cancer (at protein level).

The protein localises to the endoplasmic reticulum. Functionally, required for calcium-mediated regulation of ciliary beat frequency and mucociliary clearance in the airway. Might be involved in the regulation of intracellular calcium in tracheal epithelial cells. The protein is Anterior gradient protein 3 (AGR3) of Homo sapiens (Human).